Consider the following 136-residue polypeptide: Galectin-7 (136 aa).

In terms of domain architecture, Galectin spans 6–136 (HKTSLPQGVR…DVQLHSLNIF (131 aa)). 70 to 76 (WGREERG) contacts a beta-D-galactoside.

Monomer.

It is found in the cytoplasm. The protein resides in the nucleus. The protein localises to the secreted. In terms of biological role, could be involved in cell-cell and/or cell-matrix interactions necessary for normal growth control. Pro-apoptotic protein that functions intracellularly upstream of JNK activation and cytochrome c release. This chain is Galectin-7 (Lgals7), found in Mus musculus (Mouse).